We begin with the raw amino-acid sequence, 254 residues long: NFU1 iron-sulfur cluster scaffold homolog, mitochondrial (254 aa).

Residues 1 to 9 (MAATARRGW) constitute a mitochondrion transit peptide. Residues 173 to 241 (IKELLDTRIR…IPEVEGVEQV (69 aa)) are nifU. [4Fe-4S] cluster is bound by residues Cys-210 and Cys-213.

The protein belongs to the NifU family. Monomer and homohexamer; the apo-NFU1 is a monomer, while the holo-NFU1 is a hexamer composed of a trimer of dimer that is probably linked by some 4Fe-4S cluster. Interacts with HIRA and EPM2A/laforin. Interacts with BOLA3. Interacts with HSPA9. As to expression, ubiquitous. Expression in adult lung is weak compared to fetal lung.

It localises to the mitochondrion. It is found in the cytoplasm. Its subcellular location is the cytosol. Functionally, iron-sulfur cluster scaffold protein which can assemble [4Fe-4S] clusters and deliver them to target proteins. The polypeptide is NFU1 iron-sulfur cluster scaffold homolog, mitochondrial (NFU1) (Homo sapiens (Human)).